Consider the following 356-residue polypeptide: PEP-dependent dihydroxyacetone kinase, dihydroxyacetone-binding subunit DhaK (356 aa).

Positions 7 to 352 (DVQDVLDEQL…WDAPVHTPAL (346 aa)) constitute a DhaK domain. Dihydroxyacetone contacts are provided by residues 53–56 (GSGH), Lys104, and Asp109. His56 functions as the Proton acceptor in the catalytic mechanism. His218 serves as the catalytic Tele-hemiaminal-histidine intermediate.

Homodimer. The dihydroxyacetone kinase complex is composed of a homodimer of DhaM, a homodimer of DhaK and the subunit DhaL. DhaL also forms a complex with DhaR.

The catalysed reaction is dihydroxyacetone + phosphoenolpyruvate = dihydroxyacetone phosphate + pyruvate. The protein operates within polyol metabolism; glycerol degradation. Its activity is regulated as follows. Inhibited by chloro-3-hydroxyacetone and D,L-glyceraldehyde. Functionally, dihydroxyacetone binding subunit of the dihydroxyacetone kinase, which is responsible for the phosphoenolpyruvate (PEP)-dependent phosphorylation of dihydroxyacetone via a phosphoryl group transfer from DhaL-ATP. Binds covalently dihydroxyacetone in hemiaminal linkage. DhaK also acts as corepressor of the transcription activator DhaR by binding to the sensor domain of DhaR. In the presence of dihydroxyacetone, DhaL-ADP displaces DhaK and stimulates DhaR activity. In the absence of dihydroxyacetone, DhaL-ADP is converted by the PTS to DhaL-ATP, which does not bind to DhaR. This chain is PEP-dependent dihydroxyacetone kinase, dihydroxyacetone-binding subunit DhaK, found in Escherichia coli (strain K12).